Reading from the N-terminus, the 184-residue chain is MKRLSVLFALVASPALAASGPFFSLRNTDFIVTLAFLLFVGILVYFRVPQIVGGLLDKRAEGIRNDLAEARRLREEAQEIYASYERRQREVKSQADDIVANAKREAVAEAEKAKKALQLSIERRLKAAEEQIAGAEAEAVRAVRDRAIQTAIAAATEILGKQASPAERSAGIDKAIDEVAQRLN.

Residues 4 to 24 (LSVLFALVASPALAASGPFFS) form a helical membrane-spanning segment.

Belongs to the ATPase B chain family. In terms of assembly, F-type ATPases have 2 components, F(1) - the catalytic core - and F(0) - the membrane proton channel. F(1) has five subunits: alpha(3), beta(3), gamma(1), delta(1), epsilon(1). F(0) has three main subunits: a(1), b(2) and c(10-14). The alpha and beta chains form an alternating ring which encloses part of the gamma chain. F(1) is attached to F(0) by a central stalk formed by the gamma and epsilon chains, while a peripheral stalk is formed by the delta and b chains.

Its subcellular location is the cell inner membrane. F(1)F(0) ATP synthase produces ATP from ADP in the presence of a proton or sodium gradient. F-type ATPases consist of two structural domains, F(1) containing the extramembraneous catalytic core and F(0) containing the membrane proton channel, linked together by a central stalk and a peripheral stalk. During catalysis, ATP synthesis in the catalytic domain of F(1) is coupled via a rotary mechanism of the central stalk subunits to proton translocation. Its function is as follows. Component of the F(0) channel, it forms part of the peripheral stalk, linking F(1) to F(0). This is ATP synthase subunit b from Paracoccus denitrificans (strain Pd 1222).